The chain runs to 122 residues: Flagellar protein FliT (122 aa).

The interval 1–50 (MTSTVEFINRWQRIALLSQSLLELAQRGEWDLLLQQEVSYLQSIETVMEK) is required for homodimerization. The segment at 60 to 98 (IQDMVAGYIKQTLDNEQLLKGLLQQRLDELSSLIGQSTR) is fliD binding.

It belongs to the FliT family. Homodimer. Interacts with FliD and FlhC.

It is found in the cytoplasm. Its subcellular location is the cytosol. In terms of biological role, dual-function protein that regulates the transcription of class 2 flagellar operons and that also acts as an export chaperone for the filament-capping protein FliD. As a transcriptional regulator, acts as an anti-FlhDC factor; it directly binds FlhC, thus inhibiting the binding of the FlhC/FlhD complex to class 2 promoters, resulting in decreased expression of class 2 flagellar operons. As a chaperone, effects FliD transition to the membrane by preventing its premature polymerization, and by directing it to the export apparatus. The chain is Flagellar protein FliT from Salmonella schwarzengrund (strain CVM19633).